We begin with the raw amino-acid sequence, 622 residues long: Chaperone protein DnaK (622 aa).

Residue Thr197 is modified to Phosphothreonine; by autocatalysis. 2 stretches are compositionally biased toward basic and acidic residues: residues 515-528 (LHKE…EAVE) and 575-614 (ASKE…KKDD). 2 disordered regions span residues 515–537 (LHKE…DSLV) and 575–622 (ASKE…AEVE).

The protein belongs to the heat shock protein 70 family.

Its function is as follows. Acts as a chaperone. This Campylobacter lari (strain RM2100 / D67 / ATCC BAA-1060) protein is Chaperone protein DnaK.